The primary structure comprises 483 residues: Isocitrate dehydrogenase [NADP] (483 aa).

Position 74 (T74) interacts with NADP(+). D-threo-isocitrate-binding residues include S83, N85, R89, R99, and R121. D232 contributes to the Mg(2+) binding site. Residues 264 to 270 and N277 contribute to the NADP(+) site; that span reads HGSAPDI.

This sequence belongs to the isocitrate and isopropylmalate dehydrogenases family. In terms of assembly, homodimer. Mg(2+) is required as a cofactor. The cofactor is Mn(2+).

The enzyme catalyses D-threo-isocitrate + NADP(+) = 2-oxoglutarate + CO2 + NADPH. In terms of biological role, catalyzes the oxidative decarboxylation of isocitrate to 2-oxoglutarate and carbon dioxide with the concomitant reduction of NADP(+). In Rickettsia prowazekii (strain Madrid E), this protein is Isocitrate dehydrogenase [NADP] (icd).